Reading from the N-terminus, the 689-residue chain is Glycine--tRNA ligase beta subunit (689 aa).

The protein belongs to the class-II aminoacyl-tRNA synthetase family. In terms of assembly, tetramer of two alpha and two beta subunits.

It is found in the cytoplasm. It catalyses the reaction tRNA(Gly) + glycine + ATP = glycyl-tRNA(Gly) + AMP + diphosphate. This Hamiltonella defensa subsp. Acyrthosiphon pisum (strain 5AT) protein is Glycine--tRNA ligase beta subunit.